Reading from the N-terminus, the 466-residue chain is RUS family member 1 (466 aa).

Ala-2 carries the N-acetylalanine modification. Residues 245–265 traverse the membrane as a helical segment; it reads LLMLPLVSDCPSLSLGCFVLL.

This sequence belongs to the RUS1 family.

The protein resides in the membrane. This is RUS family member 1 from Mus musculus (Mouse).